We begin with the raw amino-acid sequence, 263 residues long: Glutamate 5-kinase (263 aa).

Residue lysine 15 participates in ATP binding. Substrate contacts are provided by serine 55, aspartate 142, and asparagine 154. ATP is bound by residues 174–175 (SD) and 216–222 (TGGIETK).

The protein belongs to the glutamate 5-kinase family.

The protein resides in the cytoplasm. It catalyses the reaction L-glutamate + ATP = L-glutamyl 5-phosphate + ADP. The protein operates within amino-acid biosynthesis; L-proline biosynthesis; L-glutamate 5-semialdehyde from L-glutamate: step 1/2. Catalyzes the transfer of a phosphate group to glutamate to form L-glutamate 5-phosphate. This is Glutamate 5-kinase from Alkaliphilus oremlandii (strain OhILAs) (Clostridium oremlandii (strain OhILAs)).